The primary structure comprises 553 residues: ATP synthase F(1) complex subunit alpha, mitochondrial (553 aa).

Residues 1–43 constitute a mitochondrion transit peptide; it reads MLSVRVAAAVARALPRRAGLVSKNALGSSFVAARNLHASNTRL. A phosphoserine mark is found at Ser-53 and Ser-65. Ser-76 carries the post-translational modification Phosphoserine; alternate. O-linked (GlcNAc) serine; alternate glycosylation occurs at Ser-76. Ser-106 bears the Phosphoserine mark. 3 positions are modified to N6-acetyllysine: Lys-123, Lys-126, and Lys-132. Position 134 is a phosphothreonine (Thr-134). N6-acetyllysine; alternate is present on Lys-161. The residue at position 161 (Lys-161) is an N6-succinyllysine; alternate. The residue at position 166 (Ser-166) is a Phosphoserine. An N6-acetyllysine; alternate modification is found at Lys-167. Lys-167 is subject to N6-succinyllysine; alternate. Phosphoserine is present on Ser-184. At Arg-204 the chain carries Omega-N-methylarginine. Gln-215, Gly-217, Lys-218, Thr-219, and Ser-220 together coordinate ATP. Thr-219 contributes to the Mg(2+) binding site. Lys-230 and Lys-239 each carry N6-acetyllysine; alternate. An N6-succinyllysine; alternate mark is found at Lys-230 and Lys-239. Lys-240 is modified (N6-acetyllysine). N6-acetyllysine; alternate is present on residues Lys-261 and Lys-305. 2 positions are modified to N6-succinyllysine; alternate: Lys-261 and Lys-305. Asp-312 contributes to the Mg(2+) binding site. Lys-427 carries the N6-acetyllysine; alternate modification. Lys-427 carries the N6-succinyllysine; alternate modification. Position 434 is an N6-acetyllysine (Lys-434). Positions 473 and 475 each coordinate ATP. N6-acetyllysine; alternate is present on residues Lys-498, Lys-506, Lys-531, and Lys-539. Lys-498, Lys-506, Lys-531, and Lys-539 each carry N6-succinyllysine; alternate. N6-acetyllysine is present on Lys-541.

It belongs to the ATPase alpha/beta chains family. As to quaternary structure, homotrimer. Component of the ATP synthase complex composed at least of ATP5F1A/subunit alpha, ATP5F1B/subunit beta, ATP5MC1/subunit c (homooctomer), MT-ATP6/subunit a, MT-ATP8/subunit 8, ATP5ME/subunit e, ATP5MF/subunit f, ATP5MG/subunit g, ATP5MK/subunit k, ATP5MJ/subunit j, ATP5F1C/subunit gamma, ATP5F1D/subunit delta, ATP5F1E/subunit epsilon, ATP5PF/subunit F6, ATP5PB/subunit b, ATP5PD/subunit d, ATP5PO/subunit OSCP. ATP synthase complex consists of a soluble F(1) head domain (subunits alpha(3) and beta(3)) - the catalytic core - and a membrane F(0) domain - the membrane proton channel (subunits c, a, 8, e, f, g, k and j). These two domains are linked by a central stalk (subunits gamma, delta, and epsilon) rotating inside the F1 region and a stationary peripheral stalk (subunits F6, b, d, and OSCP). Interacts with ATPAF2. Interacts with HRG; the interaction occurs on the surface of T-cells and alters the cell morphology when associated with concanavalin (in vitro). Interacts with PLG (angiostatin peptide); the interaction inhibits most of the angiogenic properties of angiostatin. Interacts with BLOC1S1. Interacts with BCL2L1 isoform BCL-X(L); the interaction mediates the association of BCL2L1 isoform BCL-X(L) with the mitochondrial membrane F(1)F(0) ATP synthase and enhances neurons metabolic efficiency. Interacts with CLN5 and PPT1. Interacts with S100A1; this interaction increases F1-ATPase activity. Interacts with ABCB7; this interaction allows the regulation of cellular iron homeostasis and cellular reactive oxygen species (ROS) levels in cardiomyocytes. Acetylated on lysine residues. BLOC1S1 is required for acetylation. As to expression, expressed in heart (at protein level).

The protein localises to the mitochondrion. Its subcellular location is the mitochondrion inner membrane. The protein resides in the cell membrane. Its function is as follows. Subunit alpha, of the mitochondrial membrane ATP synthase complex (F(1)F(0) ATP synthase or Complex V) that produces ATP from ADP in the presence of a proton gradient across the membrane which is generated by electron transport complexes of the respiratory chain. ATP synthase complex consist of a soluble F(1) head domain - the catalytic core - and a membrane F(1) domain - the membrane proton channel. These two domains are linked by a central stalk rotating inside the F(1) region and a stationary peripheral stalk. During catalysis, ATP synthesis in the catalytic domain of F(1) is coupled via a rotary mechanism of the central stalk subunits to proton translocation. In vivo, can only synthesize ATP although its ATP hydrolase activity can be activated artificially in vitro. With the catalytic subunit beta (ATP5F1B), forms the catalytic core in the F(1) domain. Subunit alpha does not bear the catalytic high-affinity ATP-binding sites. This chain is ATP synthase F(1) complex subunit alpha, mitochondrial, found in Sus scrofa (Pig).